The following is a 610-amino-acid chain: T-cell immunomodulatory protein (610 aa).

An N-terminal signal peptide occupies residues 1-32; it reads MAAGRLPSARAVLAPLFLGLALLSVGPAPARA. N-linked (GlcNAc...) asparagine glycosylation is found at Asn35, Asn123, Asn138, Asn145, Asn150, Asn175, and Asn241. Residues 98–135 form an FG-GAP 1; atypical repeat; it reads LVTSVVPGDYDGDSQMDVLLTYFPQNHTNSELGAVIFW. One copy of the FG-GAP 2; atypical repeat lies at 153–183; that stretch reads FHDQPLIMDFNGDLIPDVFGITNESSQPQIL. An FG-GAP 3; atypical repeat occupies 256–291; the sequence is VVGQSAFADFDGDGHMDHLLPGCEDKDCQKSAIYLM. Asn351, Asn369, and Asn480 each carry an N-linked (GlcNAc...) asparagine glycan. A helical transmembrane segment spans residues 565–585; it reads VLLTAVALIGVCIFILAIIAI.

The protein belongs to the TIP family. Interacts with RUVBL1, RUVBL2 and alpha-tubulin.

The protein resides in the secreted. Its subcellular location is the membrane. Modulator of T-cell function. Has a protective effect in graft versus host disease model. The chain is T-cell immunomodulatory protein from Mus musculus (Mouse).